We begin with the raw amino-acid sequence, 332 residues long: MKVTFEELKGAFYRVLRSRNIAEDTADACAEMFARTTESGVYSHGVNRFPRFIQQLDNGDIIPDAKPQRVTSLGAIEQWDAQRAIGNLTAKKMMDRAIELASDHGIGLVALRNANHWMRGGSYGWQAAERGYIGICWTNSIAVMPPWGAKECRIGTNPLIVAIPSTPITMVDMSMSMFSYGMLEVNRLAGRELPVDGGFDDNGQLTKEPGVIEKNRRILPMGYWKGSGLSIVLDMIATLLSNGSSVAEVTQENSDEYGVSQIFIAIEVDKLIDGATRDAKLQRIMDFITTAERADDNVAIRLPGHEFTKLLDDNRRHGITIDDSVWAKIQAL.

The Proton donor role is filled by H44. NAD(+)-binding positions include 168-174 (ITMVDMS), 224-225 (WK), and 304-306 (GHE).

The protein belongs to the LDH2/MDH2 oxidoreductase family. DlgD subfamily. As to quaternary structure, homodimer.

It localises to the cytoplasm. The catalysed reaction is 3-dehydro-L-gulonate + NAD(+) = 2,3-dioxo-L-gulonate + NADH + H(+). The enzyme catalyses 3-dehydro-L-gulonate + NADP(+) = 2,3-dioxo-L-gulonate + NADPH + H(+). Catalyzes the reduction of 2,3-diketo-L-gulonate in the presence of NADH, to form 3-keto-L-gulonate. The chain is 2,3-diketo-L-gulonate reductase from Salmonella heidelberg (strain SL476).